Consider the following 867-residue polypeptide: E3 ubiquitin-protein ligase SH3RF1 (867 aa).

The RING-type zinc-finger motif lies at 12-53 (CPVCLERLDATAKVLPCQHTFCRRCLLGIVGSRGELRCPECR). The tract at residues 101–127 (AQGAGGSQRDPGPTGGQSQRVQAKSTP) is disordered. Residues 116 to 125 (GQSQRVQAKS) are compositionally biased toward polar residues. SH3 domains are found at residues 132–191 (PQLP…VIKP) and 194–257 (QPPP…FNSA). Positions 265 to 328 (DKPSEGGGDS…PPPQRHSMEI (64 aa)) are disordered. A compositionally biased stretch (low complexity) spans 275-285 (SEGPSSSSSGP). Positions 436–497 (QRPTVYVAMF…PGNYMSPVSR (62 aa)) constitute an SH3 3 domain. Residues 706–794 (LSNKKKLRPS…APIAPPPRQP (89 aa)) are disordered. Residues 760-769 (SELSMSSSSS) show a composition bias toward low complexity. A compositionally biased stretch (polar residues) spans 770 to 784 (NTDAVTHRSSPQDNT). Positions 808 to 867 (IVCERYRVVVSYPPQSEAELELKEGDIVFVHKKREDGWFKGTLQRNGRTGLFPGSFVDSI) constitute an SH3 4 domain.

Belongs to the SH3RF family. Post-translationally, autoubiquitinated. Ubiquitinated by SH3RF2, leading to proteasome-mediated degradation.

It is found in the cytoplasm. The protein localises to the perinuclear region. The protein resides in the cell projection. It localises to the lamellipodium. Its subcellular location is the golgi apparatus. It is found in the trans-Golgi network. The catalysed reaction is S-ubiquitinyl-[E2 ubiquitin-conjugating enzyme]-L-cysteine + [acceptor protein]-L-lysine = [E2 ubiquitin-conjugating enzyme]-L-cysteine + N(6)-ubiquitinyl-[acceptor protein]-L-lysine.. It participates in protein modification; protein ubiquitination. In terms of biological role, has E3 ubiquitin-protein ligase activity. In the absence of an external substrate, it can catalyze self-ubiquitination. Acts as a scaffold protein that contributes to the effective activation of the JNK signaling pathway. This chain is E3 ubiquitin-protein ligase SH3RF1 (sh3rf1), found in Danio rerio (Zebrafish).